Consider the following 349-residue polypeptide: Putative F-box/kelch-repeat protein At4g02310 (349 aa).

The region spanning 11 to 58 (SLFSLLPNDIVLNILARVPRWYHPILSCVSKNLRFLVSSSELKITRSL) is the F-box domain. One copy of the Kelch repeat lies at 154-204 (KIYVFGGIDDMNKRYYEGIHAQVFDLKTQTWHVGPNLSVKLACLNRSVVTP).

The chain is Putative F-box/kelch-repeat protein At4g02310 from Arabidopsis thaliana (Mouse-ear cress).